A 447-amino-acid polypeptide reads, in one-letter code: UPF0210 protein lhv_0606 (447 aa).

This sequence belongs to the UPF0210 family. Homodimer.

This chain is UPF0210 protein lhv_0606, found in Lactobacillus helveticus (strain DPC 4571).